The primary structure comprises 435 residues: Endoglucanase EG-1 (435 aa).

The signal sequence occupies residues 1–20 (MARGTALLGLTSLLLGLVNG). A Pyrrolidone carboxylic acid modification is found at Gln21. Cystine bridges form between Cys38–Cys44, Cys71–Cys93, and Cys83–Cys89. Residue Asn109 is glycosylated (N-linked (GlcNAc...) asparagine). 6 disulfide bridges follow: Cys160/Cys385, Cys192/Cys215, Cys196/Cys214, Cys235/Cys254, Cys243/Cys248, and Cys259/Cys335. The Nucleophile role is filled by Glu217. The active-site Proton donor is Glu222. N-linked (GlcNAc...) asparagine glycosylation is present at Asn267.

Belongs to the glycosyl hydrolase 7 (cellulase C) family.

It localises to the secreted. It catalyses the reaction Endohydrolysis of (1-&gt;4)-beta-D-glucosidic linkages in cellulose, lichenin and cereal beta-D-glucans.. Functionally, the biological conversion of cellulose to glucose generally requires three types of hydrolytic enzymes: (1) Endoglucanases which cut internal beta-1,4-glucosidic bonds; (2) Exocellobiohydrolases that cut the disaccharide cellobiose from the non-reducing end of the cellulose polymer chain; (3) Beta-1,4-glucosidases which hydrolyze the cellobiose and other short cello-oligosaccharides to glucose. The chain is Endoglucanase EG-1 (EG-1) from Humicola insolens (Soft-rot fungus).